The primary structure comprises 195 residues: Protein GrpE (195 aa).

Residues 1–14 show a composition bias toward basic and acidic residues; it reads MQEPHDQEPIEKQK. Residues 1 to 45 are disordered; it reads MQEPHDQEPIEKQKLPGMDDVLETEHSGTVAGNTERAGEDAAPSL.

This sequence belongs to the GrpE family. Homodimer.

Its subcellular location is the cytoplasm. Participates actively in the response to hyperosmotic and heat shock by preventing the aggregation of stress-denatured proteins, in association with DnaK and GrpE. It is the nucleotide exchange factor for DnaK and may function as a thermosensor. Unfolded proteins bind initially to DnaJ; upon interaction with the DnaJ-bound protein, DnaK hydrolyzes its bound ATP, resulting in the formation of a stable complex. GrpE releases ADP from DnaK; ATP binding to DnaK triggers the release of the substrate protein, thus completing the reaction cycle. Several rounds of ATP-dependent interactions between DnaJ, DnaK and GrpE are required for fully efficient folding. This Nitrosomonas europaea (strain ATCC 19718 / CIP 103999 / KCTC 2705 / NBRC 14298) protein is Protein GrpE.